The chain runs to 239 residues: LexA repressor (239 aa).

Residues 26-46 (FDEMKDALDLASKSGIHRLIT) constitute a DNA-binding region (H-T-H motif). Residues Ser159 and Lys197 each act as for autocatalytic cleavage activity in the active site.

This sequence belongs to the peptidase S24 family. In terms of assembly, homodimer.

The enzyme catalyses Hydrolysis of Ala-|-Gly bond in repressor LexA.. Its function is as follows. Represses a number of genes involved in the response to DNA damage (SOS response), including recA and lexA. In the presence of single-stranded DNA, RecA interacts with LexA causing an autocatalytic cleavage which disrupts the DNA-binding part of LexA, leading to derepression of the SOS regulon and eventually DNA repair. This is LexA repressor from Rhizobium etli (strain CIAT 652).